Here is a 789-residue protein sequence, read N- to C-terminus: Phenylalanine--tRNA ligase beta subunit (789 aa).

Residues 38–151 (KKHLQSFVVV…NTYNVGESFF (114 aa)) form the tRNA-binding domain. The B5 domain occupies 398-474 (HNDILLNFSP…RLYGYDKILE (77 aa)). Positions 452, 458, 461, and 462 each coordinate Mg(2+). Positions 694–787 (LRYQSVKRDF…ISKGFNGILR (94 aa)) constitute an FDX-ACB domain.

This sequence belongs to the phenylalanyl-tRNA synthetase beta subunit family. Type 1 subfamily. In terms of assembly, tetramer of two alpha and two beta subunits. The cofactor is Mg(2+).

The protein localises to the cytoplasm. The enzyme catalyses tRNA(Phe) + L-phenylalanine + ATP = L-phenylalanyl-tRNA(Phe) + AMP + diphosphate + H(+). The sequence is that of Phenylalanine--tRNA ligase beta subunit from Ehrlichia ruminantium (strain Welgevonden).